The sequence spans 101 residues: Small ribosomal subunit protein uS14 (101 aa).

A disordered region spans residues 36–61 (ASAEDRRAARQKLQSLPRNSSPVRQR). A compositionally biased stretch (polar residues) spans 47–59 (KLQSLPRNSSPVR).

This sequence belongs to the universal ribosomal protein uS14 family. Part of the 30S ribosomal subunit. Contacts proteins S3 and S10.

In terms of biological role, binds 16S rRNA, required for the assembly of 30S particles and may also be responsible for determining the conformation of the 16S rRNA at the A site. The chain is Small ribosomal subunit protein uS14 from Methylobacillus flagellatus (strain ATCC 51484 / DSM 6875 / VKM B-1610 / KT).